The chain runs to 438 residues: Protein DJ-1 homolog B (438 aa).

The N-terminal 45 residues, 1 to 45, are a transit peptide targeting the chloroplast; the sequence is MASSSLCHRYFNKITVTPFFNTKKLHHYSPRRISLRVNRRSFSIS. 2 PfpI endopeptidase domains span residues 53–220 and 258–424; these read KKVL…EQLL and PQIL…EKFY.

Belongs to the peptidase C56 family. Homodimer.

The protein resides in the plastid. Its subcellular location is the chloroplast. Its function is as follows. May be involved in oxidative stress response. The sequence is that of Protein DJ-1 homolog B (DJ1B) from Arabidopsis thaliana (Mouse-ear cress).